Here is a 104-residue protein sequence, read N- to C-terminus: Large ribosomal subunit protein bL21 (104 aa).

Belongs to the bacterial ribosomal protein bL21 family. As to quaternary structure, part of the 50S ribosomal subunit. Contacts protein L20.

This protein binds to 23S rRNA in the presence of protein L20. This chain is Large ribosomal subunit protein bL21, found in Streptococcus pneumoniae serotype 2 (strain D39 / NCTC 7466).